A 169-amino-acid polypeptide reads, in one-letter code: Disulfide bond formation protein B 1 (169 aa).

At 1-14 (MSDDRLGLGRERRF) the chain is on the cytoplasmic side. Residues 15–31 (LVLLGIICLALIGGALY) form a helical membrane-spanning segment. Topologically, residues 32 to 49 (MQVVLGEAPCPLCILQRY) are periplasmic. A disulfide bridge links cysteine 41 with cysteine 44. A helical membrane pass occupies residues 50-64 (ALLLIALFAFIGAAM). Over 65 to 71 (SSRRGVT) the chain is Cytoplasmic. Residues 72 to 89 (VMETLVVICALAGAGVAG) traverse the membrane as a helical segment. The Periplasmic segment spans residues 90–144 (HHVYTQFYPSVSCGIDVLQPIVDSLPLAKIFPLGFQVDGFCSTPYPPILGLSLAQ). A disulfide bridge connects residues cysteine 102 and cysteine 130. A helical membrane pass occupies residues 145-163 (WALVAFVLTVILVPLGVVR). At 164-169 (NRKKTY) the chain is on the cytoplasmic side.

The protein belongs to the DsbB family.

It localises to the cell inner membrane. Required for disulfide bond formation in some periplasmic proteins. Acts by oxidizing the DsbA protein. The polypeptide is Disulfide bond formation protein B 1 (Pseudomonas fluorescens (strain ATCC BAA-477 / NRRL B-23932 / Pf-5)).